A 236-amino-acid chain; its full sequence is CDP-diacylglycerol--glycerol-3-phosphate 3-phosphatidyltransferase (236 aa).

A run of 5 helical transmembrane segments spans residues 39 to 59 (IFIA…GVLA), 66 to 86 (ISIS…TAVI), 120 to 140 (VLIA…VFIV), 163 to 183 (WLGK…CFVW), and 196 to 216 (GLFF…FSIW).

The protein belongs to the CDP-alcohol phosphatidyltransferase class-I family.

The protein localises to the cell membrane. It carries out the reaction a CDP-1,2-diacyl-sn-glycerol + sn-glycerol 3-phosphate = a 1,2-diacyl-sn-glycero-3-phospho-(1'-sn-glycero-3'-phosphate) + CMP + H(+). It functions in the pathway phospholipid metabolism; phosphatidylglycerol biosynthesis; phosphatidylglycerol from CDP-diacylglycerol: step 1/2. Functionally, this protein catalyzes the committed step to the synthesis of the acidic phospholipids. The chain is CDP-diacylglycerol--glycerol-3-phosphate 3-phosphatidyltransferase (pgsA) from Mycoplasma genitalium (strain ATCC 33530 / DSM 19775 / NCTC 10195 / G37) (Mycoplasmoides genitalium).